We begin with the raw amino-acid sequence, 97 residues long: Putative CC-type chemokine U83 (97 aa).

2 cysteine pairs are disulfide-bonded: cysteine 32-cysteine 62 and cysteine 33-cysteine 76.

Belongs to the intercrine beta (chemokine CC) family. Highly divergent.

The sequence is that of Putative CC-type chemokine U83 (U83) from Human herpesvirus 6A (strain Uganda-1102) (HHV-6 variant A).